The following is a 293-amino-acid chain: Cytidine deaminase (293 aa).

2 CMP/dCMP-type deaminase domains span residues glutamate 47 to alanine 166 and glutamate 186 to valine 293. Residue asparagine 88–glutamate 90 coordinates substrate. Zn(2+) is bound at residue histidine 101. The Proton donor role is filled by glutamate 103. Residues cysteine 128 and cysteine 131 each coordinate Zn(2+).

This sequence belongs to the cytidine and deoxycytidylate deaminase family. In terms of assembly, homodimer. Zn(2+) is required as a cofactor.

The catalysed reaction is cytidine + H2O + H(+) = uridine + NH4(+). The enzyme catalyses 2'-deoxycytidine + H2O + H(+) = 2'-deoxyuridine + NH4(+). In terms of biological role, this enzyme scavenges exogenous and endogenous cytidine and 2'-deoxycytidine for UMP synthesis. The sequence is that of Cytidine deaminase from Aeromonas salmonicida (strain A449).